The following is a 332-amino-acid chain: Probable sugar phosphate/phosphate translocator At1g53660 (332 aa).

10 consecutive transmembrane segments (helical) span residues 19–39 (ASILLYITLSSGQIFFNKWVL), 46–66 (FPYPLGLTLLHMTFSSVLCFL), 82–102 (LEIYVTSVIPIGAMFAMTLWL), 120–140 (AIMPVAVFILGVCVGLEIMSC), 143–163 (LLIMSVISFGVLVSSYGELNI), 165–185 (WVGVVYQMGGIVSEALRLILM), 199–219 (LSLMYYMSPCSAICLFIPWIF), 233–253 (LVLSLNSLCTFALNLSVFLVI), 259–281 (LTIRIAGVVKDWLVVLVSALLFA), and 285–304 (LTIINLFGYAVAIVGVATYN). A compositionally biased stretch (polar residues) spans 312 to 322 (ESITLVSQSPK). Residues 312–332 (ESITLVSQSPKNSDKKPDGPL) form a disordered region. The segment covering 323 to 332 (NSDKKPDGPL) has biased composition (basic and acidic residues).

The protein belongs to the TPT transporter family. TPT (TC 2.A.7.9) subfamily.

It localises to the membrane. The polypeptide is Probable sugar phosphate/phosphate translocator At1g53660 (Arabidopsis thaliana (Mouse-ear cress)).